We begin with the raw amino-acid sequence, 132 residues long: Heat shock protein 15 homolog (132 aa).

The S4 RNA-binding domain maps to 11 to 73; it reads VRLDKWLWAA…DEREVRVLQV (63 aa). Composition is skewed to basic and acidic residues over residues 94–105 and 114–125; these read LKKRAENSEARR and PERRPDKQERRQ. Positions 94–132 are disordered; the sequence is LKKRAENSEARRFNSQFAPSPERRPDKQERRQLIKVKQY.

The protein belongs to the HSP15 family.

Functionally, may play an important role in binding of nucleic acid. More specific for RNA. The protein is Heat shock protein 15 homolog (hslR) of Aeromonas salmonicida.